The sequence spans 57 residues: Large ribosomal subunit protein bL32 (57 aa).

The disordered stretch occupies residues 1-38 (MAVQQNKPTRSKRGMRRSHDALTAVTSLSVDQTSGEKH). Over residues 24–33 (AVTSLSVDQT) the composition is skewed to polar residues.

The protein belongs to the bacterial ribosomal protein bL32 family.

The chain is Large ribosomal subunit protein bL32 from Enterobacter sp. (strain 638).